A 206-amino-acid polypeptide reads, in one-letter code: Holliday junction branch migration complex subunit RuvA (206 aa).

Positions 1-64 (MIGRLRGNLL…EDAQLLYGFN (64 aa)) are domain I. The tract at residues 65-143 (TKKERALFRE…GWGAGDLFTP (79 aa)) is domain II. The interval 144–157 (ADTTSMDDASDLIS) is flexible linker. Residues 158-206 (SPQSAQDEAVSALISLGYKPVQASKMVSQVAKPDMTSESLIRESLKSMI) are domain III.

It belongs to the RuvA family. Homotetramer. Forms an RuvA(8)-RuvB(12)-Holliday junction (HJ) complex. HJ DNA is sandwiched between 2 RuvA tetramers; dsDNA enters through RuvA and exits via RuvB. An RuvB hexamer assembles on each DNA strand where it exits the tetramer. Each RuvB hexamer is contacted by two RuvA subunits (via domain III) on 2 adjacent RuvB subunits; this complex drives branch migration. In the full resolvosome a probable DNA-RuvA(4)-RuvB(12)-RuvC(2) complex forms which resolves the HJ.

The protein localises to the cytoplasm. Functionally, the RuvA-RuvB-RuvC complex processes Holliday junction (HJ) DNA during genetic recombination and DNA repair, while the RuvA-RuvB complex plays an important role in the rescue of blocked DNA replication forks via replication fork reversal (RFR). RuvA specifically binds to HJ cruciform DNA, conferring on it an open structure. The RuvB hexamer acts as an ATP-dependent pump, pulling dsDNA into and through the RuvAB complex. HJ branch migration allows RuvC to scan DNA until it finds its consensus sequence, where it cleaves and resolves the cruciform DNA. In Aliivibrio salmonicida (strain LFI1238) (Vibrio salmonicida (strain LFI1238)), this protein is Holliday junction branch migration complex subunit RuvA.